The primary structure comprises 86 residues: Small ribosomal subunit protein bS16 (86 aa).

This sequence belongs to the bacterial ribosomal protein bS16 family.

The polypeptide is Small ribosomal subunit protein bS16 (Myxococcus xanthus (strain DK1622)).